The primary structure comprises 483 residues: MQTLNRRDFPGRSHPDKIIQFGEGNFLRAFVDWQIDLLNEHTDLNAGIVVIRPIDTDFPPSLSTQDGLYTAVIRGLNEQGEAVRESRLIRSVNREINIYRQFDDYLALARDANIRFMFSNTTEAGIAWNEADQFSDAPPSSFPAKLTRLLFERFEHFDGAADKGWVLLPCELIDYNGEALRELVLRYASHWQLPAAFTHWLTENNTFCSTLVDRIVTGYPRDEVAALQTELGYQDSFLDTAEYFYLFVIQGPQGLAQELRLDQLDLNVRIVDDIKPYKERKVAILNGAHTALVPVAYLSGLDTVGQTMDDAQISRFVEKTITEEIVPVLDLPEDELLSFSQAVLSRFRNPFIQHQLLSIALNGMTKFRTRILPQLLTYQQQKGQLPPRLTFALAALIAFYRGEREGQTYPLQDDAHWLERYSTLWNGVKHGDIALAELVNRVLSDANHWGQDLTAVPQLANQVTEQLQTILSRGMRAAVAAYS.

18–29 (IIQFGEGNFLRA) lines the NAD(+) pocket.

It belongs to the mannitol dehydrogenase family. UxaB subfamily.

It carries out the reaction D-altronate + NAD(+) = keto-D-tagaturonate + NADH + H(+). It functions in the pathway carbohydrate metabolism; pentose and glucuronate interconversion. This chain is Altronate oxidoreductase, found in Yersinia pestis.